We begin with the raw amino-acid sequence, 62 residues long: Protein DsrB (62 aa).

This sequence belongs to the DsrB family.

This chain is Protein DsrB, found in Shigella boydii serotype 18 (strain CDC 3083-94 / BS512).